Here is a 426-residue protein sequence, read N- to C-terminus: Serine--tRNA ligase (426 aa).

230-232 (TAE) contacts L-serine. 261–263 (RSE) is a binding site for ATP. E284 lines the L-serine pocket. 348 to 351 (EISS) is a binding site for ATP. S384 contributes to the L-serine binding site.

This sequence belongs to the class-II aminoacyl-tRNA synthetase family. Type-1 seryl-tRNA synthetase subfamily. Homodimer. The tRNA molecule binds across the dimer.

Its subcellular location is the cytoplasm. It catalyses the reaction tRNA(Ser) + L-serine + ATP = L-seryl-tRNA(Ser) + AMP + diphosphate + H(+). The catalysed reaction is tRNA(Sec) + L-serine + ATP = L-seryl-tRNA(Sec) + AMP + diphosphate + H(+). Its pathway is aminoacyl-tRNA biosynthesis; selenocysteinyl-tRNA(Sec) biosynthesis; L-seryl-tRNA(Sec) from L-serine and tRNA(Sec): step 1/1. Catalyzes the attachment of serine to tRNA(Ser). Is also able to aminoacylate tRNA(Sec) with serine, to form the misacylated tRNA L-seryl-tRNA(Sec), which will be further converted into selenocysteinyl-tRNA(Sec). The sequence is that of Serine--tRNA ligase from Erythrobacter litoralis (strain HTCC2594).